We begin with the raw amino-acid sequence, 186 residues long: Acetyltransferase PA5475 (186 aa).

An N-acetyltransferase domain is found at 31–186 (VLIRPLREED…STQVIHRLAL (156 aa)). CoA is bound by residues 117–119 (VTI), Gly-125, Asn-156, and 161–163 (DLC).

In terms of biological role, catalyzes the transfer of an acetyl group from acetyl coenzyme A (AcCoA) to an acceptor substrate and releases both CoA and the acetylated product. It prefers the antibiotic chloramphenicol. The protein is Acetyltransferase PA5475 of Pseudomonas aeruginosa (strain ATCC 15692 / DSM 22644 / CIP 104116 / JCM 14847 / LMG 12228 / 1C / PRS 101 / PAO1).